The following is a 341-amino-acid chain: Serpentine receptor class beta-3 (341 aa).

At Met-1–Ser-23 the chain is on the extracellular side. N-linked (GlcNAc...) asparagine glycosylation is present at Asn-5. Residues Ser-24–Thr-44 traverse the membrane as a helical segment. Residues Arg-45–Cys-58 lie on the Cytoplasmic side of the membrane. The helical transmembrane segment at Leu-59 to Phe-79 threads the bilayer. The Extracellular segment spans residues Tyr-80–Trp-103. N-linked (GlcNAc...) asparagine glycosylation is present at Asn-97. A helical membrane pass occupies residues Gly-104–Ile-124. Residues Glu-125 to Thr-141 lie on the Cytoplasmic side of the membrane. The helical transmembrane segment at Phe-142–Val-162 threads the bilayer. Residues Tyr-163–Asn-187 lie on the Extracellular side of the membrane. A helical transmembrane segment spans residues Met-188 to Leu-208. Residues Arg-209 to Thr-237 are Cytoplasmic-facing. A helical membrane pass occupies residues Phe-238–Val-258. The Extracellular segment spans residues Arg-259–Arg-276. N-linked (GlcNAc...) asparagine glycans are attached at residues Asn-267 and Asn-271. A helical transmembrane segment spans residues Gly-277 to Leu-297. Topologically, residues Arg-298 to Pro-341 are cytoplasmic.

This sequence belongs to the nematode receptor-like protein srb family. Expressed throughout the head.

It is found in the cell membrane. The protein localises to the perikaryon. It localises to the cell projection. Its subcellular location is the dendrite. G-protein coupled receptor. The polypeptide is Serpentine receptor class beta-3 (Caenorhabditis elegans).